The primary structure comprises 402 residues: Bone morphogenetic protein 8A (402 aa).

Residues 1 to 19 (MAARPGPLWLLGLTLCALG) form the signal peptide. Residues 20–263 (GGGPGLRPPP…ASPSPIRTPR (244 aa)) constitute a propeptide that is removed on maturation. Residues N158 and N343 are each glycosylated (N-linked (GlcNAc...) asparagine). Intrachain disulfides connect C301–C367, C330–C399, and C334–C401.

It belongs to the TGF-beta family. As to quaternary structure, homodimer; disulfide-linked.

It is found in the secreted. Functionally, induces cartilage and bone formation. May be the osteoinductive factor responsible for the phenomenon of epithelial osteogenesis. Plays a role in calcium regulation and bone homeostasis. Signaling protein involved in regulation of thermogenesis and energy balance. Proposed to increase the peripheral response of brown adipose tissue (BAT) to adrenergic stimulation while acting centrally in the hypothalamus to increase sympathetic output to BAT. In terms of biological role, growth factor of the TGF-beta superfamily that plays important role in various biological processes, including spermatogenesis, osteogenesis, steroidogenesis as well as regulation of energy balance. Initiates the canonical BMP signaling cascade by associating with type I receptor BMPR1A and type II receptor BMPR2. Once all three components are bound together in a complex at the cell surface, BMPR2 phosphorylates and activates BMPR1A. In turn, BMPR1A propagates signal by phosphorylating SMAD1/5/8 that travel to the nucleus and act as activators and repressors of transcription of target genes. In addition, activates the SMAD2/3 pathway. The chain is Bone morphogenetic protein 8A (BMP8A) from Homo sapiens (Human).